The chain runs to 82 residues: Small ribosomal subunit protein bS18 (82 aa).

It belongs to the bacterial ribosomal protein bS18 family. In terms of assembly, part of the 30S ribosomal subunit. Forms a tight heterodimer with protein bS6.

Binds as a heterodimer with protein bS6 to the central domain of the 16S rRNA, where it helps stabilize the platform of the 30S subunit. This is Small ribosomal subunit protein bS18 from Chlamydia pneumoniae (Chlamydophila pneumoniae).